The sequence spans 705 residues: MVRATPIHRYRNIGIMAHIDAGKTTTSERILFYAGVCHQMGEVHDGAAVMDWMEQEQERGITITSAATTVFWSGMDKSMPQHRFNIIDTPGHVDFTIEVERSLRVLDGAVFVLCAVGGVQPQSETVWRQANKYFVPRMAFVNKMDRTGANFDKVVEQLKARLGAYPVPMQVPIGAEDGFEGVIDLLKMKAIHWDAASQGTVFEYRDIPIELVDKASKARAFMVEAAAEATEELMDKYLNEGELKEQEILEGLRERTLKVEIIPVFCGSAFKNKGVQAMLDGVIHLLPSPADRPPVQGLDEKGNECRCKASDSEPFSALAFKIMTDPFVGSLTFFRVYSGVLNSGDQVYNSVKLKKERVGRILQMHSNQRDEIKEVRAGDIAAAVGLKDVTTGDTLCDQNHIITLERMIFPEPVISMAVEPKTKSDQEKMGMALGRLAQEDPSFRVKTDEESGQTIISGMGELHLDIIVDRMRREFNVEANVGKPQVAYRETIRKSDVKSDYKHVKQSGGKGQYGHVVIEISPMSDVDKQHPDVKGDFLFINEITGGVIPKEFISPIEKGLRETITSGPLAGFPVVGVKVKLVFGSYHDVDSSEMAFKLAASMAFKQGFAKANPVLLEPIMKVEIVSPEDYLGDIMGDVSRRRGVLQGQDDSLSGKVINAMIPLGEMFGYATSLRSMTQGRATFAMEFDHYEEAPTNIADTVIKKT.

In terms of domain architecture, tr-type G spans 8–290 (HRYRNIGIMA…GVIHLLPSPA (283 aa)). GTP contacts are provided by residues 17 to 24 (AHIDAGKT), 88 to 92 (DTPGH), and 142 to 145 (NKMD).

The protein belongs to the TRAFAC class translation factor GTPase superfamily. Classic translation factor GTPase family. EF-G/EF-2 subfamily.

It localises to the cytoplasm. Catalyzes the GTP-dependent ribosomal translocation step during translation elongation. During this step, the ribosome changes from the pre-translocational (PRE) to the post-translocational (POST) state as the newly formed A-site-bound peptidyl-tRNA and P-site-bound deacylated tRNA move to the P and E sites, respectively. Catalyzes the coordinated movement of the two tRNA molecules, the mRNA and conformational changes in the ribosome. The chain is Elongation factor G from Xylella fastidiosa (strain M23).